A 102-amino-acid polypeptide reads, in one-letter code: Acid shock protein (102 aa).

The first 21 residues, 1-21 (MKKVLGLVVAAAMGLSSAAFA), serve as a signal peptide directing secretion. Positions 22–41 (AETATTPAPTATTTKAAPAK) are enriched in low complexity. Residues 22-58 (AETATTPAPTATTTKAAPAKTTHHKKQHKAAPAQKAQ) constitute a propeptide that is removed on maturation. The tract at residues 22–102 (AETATTPAPT…PAKPAAQPAA (81 aa)) is disordered. A compositionally biased stretch (basic residues) spans 80–90 (AAKKHAGKHSH). Residues 91–102 (QQPAKPAAQPAA) show a composition bias toward low complexity.

The protein belongs to the Asr family. Post-translationally, proteolytic processing gives rise to the active protein.

It is found in the periplasm. Its function is as follows. Required for growth and/or survival at acidic conditions. The sequence is that of Acid shock protein from Escherichia coli (strain SE11).